The sequence spans 94 residues: Large ribosomal subunit protein eL37 (94 aa).

Residues Cys-19, Cys-22, Cys-34, and Cys-37 each contribute to the Zn(2+) site. The segment at 19 to 37 (CRRCGKATYHKQKLRCAAC) adopts a C4-type zinc-finger fold.

Belongs to the eukaryotic ribosomal protein eL37 family. Zn(2+) serves as cofactor.

It is found in the cytoplasm. Its function is as follows. Binds to the 23S rRNA. The sequence is that of Large ribosomal subunit protein eL37 (RPL37) from Tetrahymena thermophila (strain SB210).